The following is a 200-amino-acid chain: Dephospho-CoA kinase (200 aa).

The region spanning 6-200 is the DPCK domain; that stretch reads AIALSGGIAT…KIKAKYLEKK (195 aa). 14–19 contributes to the ATP binding site; the sequence is ATGKST.

The protein belongs to the CoaE family.

Its subcellular location is the cytoplasm. The catalysed reaction is 3'-dephospho-CoA + ATP = ADP + CoA + H(+). Its pathway is cofactor biosynthesis; coenzyme A biosynthesis; CoA from (R)-pantothenate: step 5/5. In terms of biological role, catalyzes the phosphorylation of the 3'-hydroxyl group of dephosphocoenzyme A to form coenzyme A. The chain is Dephospho-CoA kinase from Sulfurimonas denitrificans (strain ATCC 33889 / DSM 1251) (Thiomicrospira denitrificans (strain ATCC 33889 / DSM 1251)).